The primary structure comprises 475 residues: Ribulose bisphosphate carboxylase large chain (475 aa).

Positions methionine 1–serine 2 are excised as a propeptide. At proline 3 the chain carries N-acetylproline. Asparagine 123 and threonine 173 together coordinate substrate. Lysine 175 (proton acceptor) is an active-site residue. Lysine 177 provides a ligand contact to substrate. Mg(2+) contacts are provided by lysine 201, aspartate 203, and glutamate 204. An N6-carboxylysine modification is found at lysine 201. Histidine 294 functions as the Proton acceptor in the catalytic mechanism. 3 residues coordinate substrate: arginine 295, histidine 327, and serine 379.

It belongs to the RuBisCO large chain family. Type I subfamily. In terms of assembly, heterohexadecamer of 8 large chains and 8 small chains; disulfide-linked. The disulfide link is formed within the large subunit homodimers. It depends on Mg(2+) as a cofactor. In terms of processing, the disulfide bond which can form in the large chain dimeric partners within the hexadecamer appears to be associated with oxidative stress and protein turnover.

The protein resides in the plastid. The protein localises to the chloroplast. The catalysed reaction is 2 (2R)-3-phosphoglycerate + 2 H(+) = D-ribulose 1,5-bisphosphate + CO2 + H2O. It catalyses the reaction D-ribulose 1,5-bisphosphate + O2 = 2-phosphoglycolate + (2R)-3-phosphoglycerate + 2 H(+). RuBisCO catalyzes two reactions: the carboxylation of D-ribulose 1,5-bisphosphate, the primary event in carbon dioxide fixation, as well as the oxidative fragmentation of the pentose substrate in the photorespiration process. Both reactions occur simultaneously and in competition at the same active site. The sequence is that of Ribulose bisphosphate carboxylase large chain from Gnetum parvifolium (Small-leaved jointfir).